A 425-amino-acid chain; its full sequence is Glutamate-1-semialdehyde 2,1-aminomutase (425 aa).

Lys-265 is modified (N6-(pyridoxal phosphate)lysine).

It belongs to the class-III pyridoxal-phosphate-dependent aminotransferase family. HemL subfamily. Homodimer. The cofactor is pyridoxal 5'-phosphate.

The protein resides in the cytoplasm. The enzyme catalyses (S)-4-amino-5-oxopentanoate = 5-aminolevulinate. The protein operates within porphyrin-containing compound metabolism; protoporphyrin-IX biosynthesis; 5-aminolevulinate from L-glutamyl-tRNA(Glu): step 2/2. In Laribacter hongkongensis (strain HLHK9), this protein is Glutamate-1-semialdehyde 2,1-aminomutase.